The primary structure comprises 278 residues: S-formylglutathione hydrolase YeiG (278 aa).

Catalysis depends on charge relay system residues S145, D223, and H256.

This sequence belongs to the esterase D family.

It catalyses the reaction S-formylglutathione + H2O = formate + glutathione + H(+). Serine hydrolase involved in the detoxification of formaldehyde. Hydrolyzes S-formylglutathione to glutathione and formate. The polypeptide is S-formylglutathione hydrolase YeiG (yeiG) (Escherichia coli O6:K15:H31 (strain 536 / UPEC)).